The primary structure comprises 367 residues: Phosphoribosylaminoimidazole-succinocarboxamide synthase (367 aa).

Belongs to the SAICAR synthetase family.

The catalysed reaction is 5-amino-1-(5-phospho-D-ribosyl)imidazole-4-carboxylate + L-aspartate + ATP = (2S)-2-[5-amino-1-(5-phospho-beta-D-ribosyl)imidazole-4-carboxamido]succinate + ADP + phosphate + 2 H(+). The protein operates within purine metabolism; IMP biosynthesis via de novo pathway; 5-amino-1-(5-phospho-D-ribosyl)imidazole-4-carboxamide from 5-amino-1-(5-phospho-D-ribosyl)imidazole-4-carboxylate: step 1/2. The polypeptide is Phosphoribosylaminoimidazole-succinocarboxamide synthase (Shewanella baltica (strain OS223)).